Reading from the N-terminus, the 294-residue chain is ATP synthase gamma chain (294 aa).

This sequence belongs to the ATPase gamma chain family. In terms of assembly, F-type ATPases have 2 components, CF(1) - the catalytic core - and CF(0) - the membrane proton channel. CF(1) has five subunits: alpha(3), beta(3), gamma(1), delta(1), epsilon(1). CF(0) has three main subunits: a, b and c.

Its subcellular location is the cell inner membrane. Functionally, produces ATP from ADP in the presence of a proton gradient across the membrane. The gamma chain is believed to be important in regulating ATPase activity and the flow of protons through the CF(0) complex. The protein is ATP synthase gamma chain of Rhizobium rhizogenes (strain K84 / ATCC BAA-868) (Agrobacterium radiobacter).